We begin with the raw amino-acid sequence, 295 residues long: Methionine aminopeptidase (295 aa).

A substrate-binding site is contributed by His-62. Asp-82, Asp-93, and His-153 together coordinate a divalent metal cation. His-161 is a binding site for substrate. A divalent metal cation is bound by residues Glu-187 and Glu-280.

In terms of assembly, monomer. Co(2+) serves as cofactor. The cofactor is Zn(2+). Mn(2+) is required as a cofactor. Requires Fe(2+) as cofactor.

The catalysed reaction is Release of N-terminal amino acids, preferentially methionine, from peptides and arylamides.. Its function is as follows. Removes the N-terminal methionine from nascent proteins. The N-terminal methionine is often cleaved when the second residue in the primary sequence is small and uncharged (Met-Ala-, Cys, Gly, Pro, Ser, Thr, or Val). The polypeptide is Methionine aminopeptidase (Pyrococcus furiosus (strain ATCC 43587 / DSM 3638 / JCM 8422 / Vc1)).